A 2201-amino-acid chain; its full sequence is RNA-directed RNA polymerase L (2201 aa).

The tract at residues 26 to 285 (KNIMLAQTQI…VCSKSVEYTF (260 aa)) is endonuclease. 3 residues coordinate Mn(2+): Glu51, Asp88, and Glu101. Lys114 is a catalytic residue. The RdRp catalytic domain maps to 1156–1352 (LDMKSVVRQS…FLSDRLNKFV (197 aa)). Residue Asp1312 coordinates Mg(2+).

It belongs to the Bunyavirales RNA polymerase family. As to quaternary structure, homomultimer; the oligomeric structure is essential for the polymerase activity. Interacts with nucleoprotein N. Interacts with protein Z; this interaction inhibits viral transcription and replication, Z partially blocks the product exit tunnel for the releasing nascent RNA product. Requires Mn(2+) as cofactor. The cofactor is Mg(2+).

It is found in the virion. The protein localises to the host cytoplasm. The enzyme catalyses RNA(n) + a ribonucleoside 5'-triphosphate = RNA(n+1) + diphosphate. Functionally, RNA-dependent RNA polymerase, which is responsible for the replication and transcription of the viral RNA genome using antigenomic RNA as an intermediate. During transcription, synthesizes subgenomic RNAs and assures their capping by a cap-snatching mechanism, which involves the endonuclease activity cleaving the host capped pre-mRNAs. These short capped RNAs are then used as primers for viral transcription. The 3'-end of subgenomic mRNAs molecules are heterogeneous and not polyadenylated. The replicase function is to direct synthesis of antigenomic and genomic RNA which are encapsidated and non capped. As a consequence of the use of the same enzyme for both transcription and replication, these mechanisms need to be well coordinated. These processes may be regulated by proteins N and Z in a dose-dependent manner. Z protein inhibits the viral polymerase L und thus the viral transcription and RNA synthesis. The sequence is that of RNA-directed RNA polymerase L from Oecomys bicolor (Bicolored arboreal rice rat).